The chain runs to 256 residues: Ciliary microtubule associated protein 1A (256 aa).

STPGR repeat units follow at residues Pro-66–Arg-92, Pro-181–Arg-206, and Pro-217–Arg-242.

It belongs to the CIMAP family.

The protein localises to the cytoplasm. Its subcellular location is the cytoskeleton. The protein resides in the flagellum axoneme. Outer dense fibers are filamentous structures located on the outside of the axoneme in the midpiece and principal piece of the mammalian sperm tail. May help to maintain the passive elastic structures and elastic recoil of the sperm tail. The protein is Ciliary microtubule associated protein 1A (cimap1a) of Xenopus tropicalis (Western clawed frog).